The sequence spans 126 residues: Protein ApaG (126 aa).

The ApaG domain occupies 2–126 (SDPRYQIDVS…FRLAVPGALH (125 aa)).

The protein is Protein ApaG of Pseudomonas putida (strain W619).